The chain runs to 325 residues: Thiamine-monophosphate kinase (325 aa).

Mg(2+)-binding residues include D30, S45, T46, and D47. H54 is a substrate binding site. 2 residues coordinate Mg(2+): D75 and D122. ATP is bound by residues 121–122 (GD) and R146. D212 serves as a coordination point for Mg(2+). Residue S214 coordinates ATP. D215 is a Mg(2+) binding site. 2 residues coordinate substrate: E263 and Y319.

Belongs to the thiamine-monophosphate kinase family.

The enzyme catalyses thiamine phosphate + ATP = thiamine diphosphate + ADP. It functions in the pathway cofactor biosynthesis; thiamine diphosphate biosynthesis; thiamine diphosphate from thiamine phosphate: step 1/1. Catalyzes the ATP-dependent phosphorylation of thiamine-monophosphate (TMP) to form thiamine-pyrophosphate (TPP), the active form of vitamin B1. The polypeptide is Thiamine-monophosphate kinase (Escherichia coli O157:H7).